The sequence spans 311 residues: MVDQRIKFRHLQTFVEVARQKSVIRAAEILHVSQPAVTKTIRELEDVLGVSLLEREGRGIRISRYGEVFLRHAGATMTALRQAVDSVSQEAARAGPPVRVGALPTVSVRIMPKAMSGFLAEKTGSPVKIVTGENAVLLEQLRVGDLDLVVGRLAAPQKMAGFSFEHLYSEKVRFVVRAGHPLLSPGLSVFDHLHEYPVLMPTRQSVIGPVVEQFLIANGVPALPIRIETVSDAFGRAFLRTSDAIWIISEGVVAADVADGILAILPVETGDTSGPVGLTVRADTQPSLPLSLLMQAIREAAGELFDGRTEG.

Residues 6–63 (IKFRHLQTFVEVARQKSVIRAAEILHVSQPAVTKTIRELEDVLGVSLLEREGRGIRIS) form the HTH lysR-type domain. A DNA-binding region (H-T-H motif) is located at residues 23 to 42 (VIRAAEILHVSQPAVTKTIR).

This sequence belongs to the LysR transcriptional regulatory family.

Its function is as follows. Activates transcription of the pcaDCHGB operon for the catabolism of the phenolic compound protocatechuate. The sequence is that of HTH-type transcriptional regulator PcaQ (pcaQ) from Agrobacterium fabrum (strain C58 / ATCC 33970) (Agrobacterium tumefaciens (strain C58)).